Consider the following 215-residue polypeptide: Small ribosomal subunit protein uS3 (215 aa).

Residues 39-109 (IRKFIKKRLE…EVLVDVKEVK (71 aa)) enclose the KH type-2 domain.

Belongs to the universal ribosomal protein uS3 family. As to quaternary structure, part of the 30S ribosomal subunit. Forms a tight complex with proteins S10 and S14.

In terms of biological role, binds the lower part of the 30S subunit head. Binds mRNA in the 70S ribosome, positioning it for translation. The polypeptide is Small ribosomal subunit protein uS3 (Methylacidiphilum infernorum (isolate V4) (Methylokorus infernorum (strain V4))).